We begin with the raw amino-acid sequence, 470 residues long: Nuclear segregation protein BFR1 (470 aa).

2 coiled-coil regions span residues 17-178 (DKKL…NGLN) and 237-281 (NEFK…THAK). Ser-260 bears the Phosphoserine mark. Thr-336 carries the post-translational modification Phosphothreonine. Residues 346–368 (APSKSKKYKKKNQQKNTENEQPA) form a disordered region. Residues 349 to 358 (KSKKYKKKNQ) show a composition bias toward basic residues. Phosphoserine is present on Ser-369. Positions 398-469 (NSDDVKITVE…EQEESEKDKE (72 aa)) form a coiled coil. The segment at 447-470 (QQVKKELEEKRLKEQEESEKDKEN) is disordered.

In terms of biological role, implicated in secretion, nuclear segregation and in maintenance of cell size. The sequence is that of Nuclear segregation protein BFR1 (BFR1) from Saccharomyces cerevisiae (strain ATCC 204508 / S288c) (Baker's yeast).